The sequence spans 273 residues: Dermonecrotic toxin LhSicTox-alphaIA2bii (273 aa).

His5 is a catalytic residue. 2 residues coordinate Mg(2+): Glu25 and Asp27. The active-site Nucleophile is His41. 2 cysteine pairs are disulfide-bonded: Cys45/Cys51 and Cys47/Cys190. A Mg(2+)-binding site is contributed by Asp85.

This sequence belongs to the arthropod phospholipase D family. Class II subfamily. Requires Mg(2+) as cofactor. Expressed by the venom gland.

It localises to the secreted. It catalyses the reaction an N-(acyl)-sphingosylphosphocholine = an N-(acyl)-sphingosyl-1,3-cyclic phosphate + choline. It carries out the reaction an N-(acyl)-sphingosylphosphoethanolamine = an N-(acyl)-sphingosyl-1,3-cyclic phosphate + ethanolamine. The enzyme catalyses a 1-acyl-sn-glycero-3-phosphocholine = a 1-acyl-sn-glycero-2,3-cyclic phosphate + choline. The catalysed reaction is a 1-acyl-sn-glycero-3-phosphoethanolamine = a 1-acyl-sn-glycero-2,3-cyclic phosphate + ethanolamine. Functionally, dermonecrotic toxins cleave the phosphodiester linkage between the phosphate and headgroup of certain phospholipids (sphingolipid and lysolipid substrates), forming an alcohol (often choline) and a cyclic phosphate. This toxin acts on sphingomyelin (SM). It may also act on ceramide phosphoethanolamine (CPE), lysophosphatidylcholine (LPC) and lysophosphatidylethanolamine (LPE), but not on lysophosphatidylserine (LPS), and lysophosphatidylglycerol (LPG). It acts by transphosphatidylation, releasing exclusively cyclic phosphate products as second products. Induces dermonecrosis, hemolysis, increased vascular permeability, edema, inflammatory response, and platelet aggregation. The chain is Dermonecrotic toxin LhSicTox-alphaIA2bii from Loxosceles hirsuta (Recluse spider).